Reading from the N-terminus, the 1134-residue chain is Centrosomal protein of 131 kDa (1134 aa).

Disordered stretches follow at residues 111–131 (NSSE…EEGE), 168–208 (DLPG…PLTL), 286–306 (ESSK…APSS), 425–455 (VGKK…TINP), and 492–528 (DQKQ…EDSR). The span at 180–196 (MHADLDSSDCDNDKQEV) shows a compositional bias: basic and acidic residues. Residues 494–504 (KQYDGKHKPGL) show a composition bias toward basic and acidic residues. Polar residues predominate over residues 513 to 522 (NDTASQLSLK). Positions 732-1131 (LESQNQAWEH…AVIRQQRKDY (400 aa)) form a coiled coil.

This sequence belongs to the CEP131 family. In terms of tissue distribution, expressed in chordotonal (Ch) neuronal precursors. Expressed in ciliated cells, like sensory neurons and spermatids.

The protein localises to the cytoplasm. It localises to the cytoskeleton. Its subcellular location is the microtubule organizing center. The protein resides in the centrosome. It is found in the cilium basal body. The protein localises to the centriole. In terms of biological role, cilium-specific protein with a role in cilium/flagellum formation. May be involved in transport of components into the growing cilium. In germ cells and sensory neurons, plays a role with Cby in the building of the transition zone necessary for the formation of the ciliary cap and for the correct elongation of the axoneme. In Drosophila melanogaster (Fruit fly), this protein is Centrosomal protein of 131 kDa.